The chain runs to 249 residues: UPF0309 protein GTNG_1302 (249 aa).

Positions 31 to 214 constitute an SIS domain; the sequence is VSKAVQNGGI…ALMAENGVEP (184 aa).

This sequence belongs to the UPF0309 family.

This Geobacillus thermodenitrificans (strain NG80-2) protein is UPF0309 protein GTNG_1302.